The sequence spans 339 residues: Ketol-acid reductoisomerase (NADP(+)) (339 aa).

Positions 1 to 182 (MRVYYDRDAD…GGGRSGVIET (182 aa)) constitute a KARI N-terminal Rossmann domain. NADP(+)-binding positions include 24–27 (YGSQ), Arg-48, Ser-51, Thr-53, and 83–86 (DELQ). His-108 is an active-site residue. Gly-134 provides a ligand contact to NADP(+). The KARI C-terminal knotted domain maps to 183–328 (TFKEECETDL…EKLRGMMPWI (146 aa)). The Mg(2+) site is built by Asp-191, Glu-195, Glu-227, and Glu-231. Ser-252 lines the substrate pocket.

It belongs to the ketol-acid reductoisomerase family. The cofactor is Mg(2+).

It catalyses the reaction (2R)-2,3-dihydroxy-3-methylbutanoate + NADP(+) = (2S)-2-acetolactate + NADPH + H(+). The enzyme catalyses (2R,3R)-2,3-dihydroxy-3-methylpentanoate + NADP(+) = (S)-2-ethyl-2-hydroxy-3-oxobutanoate + NADPH + H(+). The protein operates within amino-acid biosynthesis; L-isoleucine biosynthesis; L-isoleucine from 2-oxobutanoate: step 2/4. It functions in the pathway amino-acid biosynthesis; L-valine biosynthesis; L-valine from pyruvate: step 2/4. Functionally, involved in the biosynthesis of branched-chain amino acids (BCAA). Catalyzes an alkyl-migration followed by a ketol-acid reduction of (S)-2-acetolactate (S2AL) to yield (R)-2,3-dihydroxy-isovalerate. In the isomerase reaction, S2AL is rearranged via a Mg-dependent methyl migration to produce 3-hydroxy-3-methyl-2-ketobutyrate (HMKB). In the reductase reaction, this 2-ketoacid undergoes a metal-dependent reduction by NADPH to yield (R)-2,3-dihydroxy-isovalerate. The polypeptide is Ketol-acid reductoisomerase (NADP(+)) (Brucella anthropi (strain ATCC 49188 / DSM 6882 / CCUG 24695 / JCM 21032 / LMG 3331 / NBRC 15819 / NCTC 12168 / Alc 37) (Ochrobactrum anthropi)).